We begin with the raw amino-acid sequence, 508 residues long: CUGBP Elav-like family member 2 (508 aa).

Necessary for RNA-binding, TNNT2 exon 5 and NMDA R1 exon 21 inclusion stretches follow at residues 1-283 (MRCP…LQNL) and 357-508 (LAGM…SKPY). RRM domains follow at residues 40 to 123 (IKMF…PADS), 132 to 212 (RKLF…FADT), and 423 to 501 (ANLF…LKRS).

Belongs to the CELF/BRUNOL family. Interacts with A1CF. Expressed in tongue, spleen and brain (at protein level). Expressed in liver, thigh, stomach, lung and heart to very low levels (at protein level). Expressed in heart, brain, lung and muscle.

Its subcellular location is the nucleus. The protein resides in the cytoplasm. In terms of biological role, RNA-binding protein implicated in the regulation of several post-transcriptional events. Involved in pre-mRNA alternative splicing, mRNA translation and stability. Mediates exon inclusion and/or exclusion in pre-mRNA that are subject to tissue-specific and developmentally regulated alternative splicing. Specifically activates exon 5 inclusion of TNNT2 in embryonic, but not adult, skeletal muscle. Activates TNNT2 exon 5 inclusion by antagonizing the repressive effect of PTB. Acts both as an activator and as a repressor of a pair of coregulated exons: promotes inclusion of the smooth muscle (SM) exon but exclusion of the non-muscle (NM) exon in actinin pre-mRNAs. Promotes inclusion of exonS 21 and exclusion of exon 5 of the NMDA receptor R1 pre-mRNA. Involved in the apoB RNA editing activity. Increases COX2 mRNA stability and inhibits COX2 mRNA translation in epithelial cells after radiation injury. Modulates the cellular apoptosis program by regulating COX2-mediated prostaglandin E2 (PGE2) expression. Binds to (CUG)n triplet repeats in the 3'-UTR of transcripts such as DMPK. Binds to the muscle-specific splicing enhancer (MSE) intronic sites flanking the TNNT2 alternative exon 5. Binds preferentially to UG-rich sequences, in particular UG repeat and UGUU motifs. Binds to apoB mRNA, specifically to AU-rich sequences located immediately upstream of the edited cytidine. Binds AU-rich sequences in the 3'-UTR of COX2 mRNA. Binds to an intronic RNA element responsible for the silencing of exon 21 splicing. Binds to (CUG)n repeats. May be a specific regulator of miRNA biogenesis. Binds to primary microRNA pri-MIR140 and, with CELF1, negatively regulates the processing to mature miRNA. This chain is CUGBP Elav-like family member 2 (Celf2), found in Mus musculus (Mouse).